The primary structure comprises 213 residues: LexA repressor (213 aa).

Residues 27-47 constitute a DNA-binding region (H-T-H motif); sequence QTEIARAFGFKGIRAAQYHLE. Residues Ser133 and Lys170 each act as for autocatalytic cleavage activity in the active site.

It belongs to the peptidase S24 family. Homodimer.

The enzyme catalyses Hydrolysis of Ala-|-Gly bond in repressor LexA.. Its function is as follows. Represses a number of genes involved in the response to DNA damage (SOS response), including recA and lexA. Has been shown to bind to the palindromic sequence 5'-CTG-N(8-12)-C-[TC]-G. In the presence of single-stranded DNA, RecA interacts with LexA causing an autocatalytic cleavage which disrupts the DNA-binding part of LexA, leading to derepression of the SOS regulon and eventually DNA repair. The chain is LexA repressor from Xanthomonas citri (Xanthomonas campestris pv. citri).